The chain runs to 194 residues: Lymphocyte antigen 6 complex locus protein G5b (194 aa).

The signal sequence occupies residues 1–18 (MRACVLVHVLTMVGFALG). The 93-residue stretch at 26 to 118 (RTCHLCFLED…SAQHQSTLPG (93 aa)) folds into the UPAR/Ly6 domain. Disulfide bonds link C28–C55, C31–C40, C47–C73, C81–C98, and C99–C104. N182 carries N-linked (GlcNAc...) asparagine glycosylation.

Post-translationally, N-glycosylated.

It is found in the secreted. In Rattus norvegicus (Rat), this protein is Lymphocyte antigen 6 complex locus protein G5b (Ly6g5b).